The chain runs to 628 residues: Phosphomethylpyrimidine synthase (628 aa).

The disordered stretch occupies residues 1 to 22 (MSKQEKTINLSESAQVDQQSVQ). A compositionally biased stretch (polar residues) spans 7-22 (TINLSESAQVDQQSVQ). Substrate is bound by residues N232, M261, Y290, H326, 346–348 (SRG), 387–390 (DGLR), and E426. H430 provides a ligand contact to Zn(2+). A substrate-binding site is contributed by Y453. A Zn(2+)-binding site is contributed by H494. Residues C574, C577, and C582 each coordinate [4Fe-4S] cluster.

It belongs to the ThiC family. As to quaternary structure, homodimer. The cofactor is [4Fe-4S] cluster.

The enzyme catalyses 5-amino-1-(5-phospho-beta-D-ribosyl)imidazole + S-adenosyl-L-methionine = 4-amino-2-methyl-5-(phosphooxymethyl)pyrimidine + CO + 5'-deoxyadenosine + formate + L-methionine + 3 H(+). It functions in the pathway cofactor biosynthesis; thiamine diphosphate biosynthesis. Functionally, catalyzes the synthesis of the hydroxymethylpyrimidine phosphate (HMP-P) moiety of thiamine from aminoimidazole ribotide (AIR) in a radical S-adenosyl-L-methionine (SAM)-dependent reaction. The protein is Phosphomethylpyrimidine synthase of Pseudomonas putida (strain W619).